Consider the following 309-residue polypeptide: Probable lipid kinase YegS-like (309 aa).

The DAGKc domain occupies 1–133; the sequence is MPLTHIRLLL…IDIIRANNNY (133 aa). ATP contacts are provided by residues serine 39, 65-71, and threonine 95; that span reads GDGSLNE. Positions 214, 217, and 219 each coordinate Mg(2+). Catalysis depends on glutamate 273, which acts as the Proton acceptor.

The protein belongs to the diacylglycerol/lipid kinase family. YegS lipid kinase subfamily. The cofactor is Mg(2+). Requires Ca(2+) as cofactor.

Its subcellular location is the cytoplasm. In terms of biological role, probably phosphorylates lipids; the in vivo substrate is unknown. The chain is Probable lipid kinase YegS-like from Shewanella frigidimarina (strain NCIMB 400).